The chain runs to 628 residues: Siderophore iron transporter 1 (628 aa).

14 consecutive transmembrane segments (helical) span residues 68–88, 107–127, 132–152, 164–184, 194–214, 225–245, 285–305, 317–337, 354–374, 394–414, 420–440, 448–468, 488–508, and 559–579; these read IYRVALFFSLFLIAYAYGLDG, LLSTVNCIKTVIAAVGQIFFA, IFGRFSIMIVSIIFYSMGTII, VGGCFYQLGLTGIILILEVIA, LLALFIPALPFIINTWISGNV, GIGMWAFILPLACIPLGICML, IIGMLLITVFFGCVLVPFTLA, IIVPEVIGWVVVLPLYMLWEI, GIFFALLIAFFINFNWYMQGD, ITSLYSFVSVIVGTILGFILI, KPFIIFGISCWIVSFGLLVHY, SGIIGSLCLLGFGAGSFTYVT, LYLATYNIGSAFGSSVSGAVW, and KILCIIGLVFCFPLLGCAFML.

This sequence belongs to the major facilitator superfamily.

Its subcellular location is the endosome membrane. Its function is as follows. Involved in the transport of siderophore ferrioxamine B and so has a role in iron homeostasis. This chain is Siderophore iron transporter 1 (SIT1), found in Saccharomyces cerevisiae (strain ATCC 204508 / S288c) (Baker's yeast).